The primary structure comprises 314 residues: Acetyl-coenzyme A carboxylase carboxyl transferase subunit beta (314 aa).

A CoA carboxyltransferase N-terminal domain is found at 25 to 294 (VWTKCDSCSQ…PGTKPIVAEF (270 aa)). Cysteine 29, cysteine 32, cysteine 48, and cysteine 51 together coordinate Zn(2+). Residues 29-51 (CDSCSQVLYRAELERNLEVCPKC) form a C4-type zinc finger.

This sequence belongs to the AccD/PCCB family. In terms of assembly, acetyl-CoA carboxylase is a heterohexamer composed of biotin carboxyl carrier protein (AccB), biotin carboxylase (AccC) and two subunits each of ACCase subunit alpha (AccA) and ACCase subunit beta (AccD). It depends on Zn(2+) as a cofactor.

Its subcellular location is the cytoplasm. The catalysed reaction is N(6)-carboxybiotinyl-L-lysyl-[protein] + acetyl-CoA = N(6)-biotinyl-L-lysyl-[protein] + malonyl-CoA. It participates in lipid metabolism; malonyl-CoA biosynthesis; malonyl-CoA from acetyl-CoA: step 1/1. In terms of biological role, component of the acetyl coenzyme A carboxylase (ACC) complex. Biotin carboxylase (BC) catalyzes the carboxylation of biotin on its carrier protein (BCCP) and then the CO(2) group is transferred by the transcarboxylase to acetyl-CoA to form malonyl-CoA. This Photorhabdus laumondii subsp. laumondii (strain DSM 15139 / CIP 105565 / TT01) (Photorhabdus luminescens subsp. laumondii) protein is Acetyl-coenzyme A carboxylase carboxyl transferase subunit beta.